The following is a 217-amino-acid chain: Octanoyltransferase (217 aa).

A BPL/LPL catalytic domain is found at 32–207 (SDSPDELWIV…TLSQLLGYQQ (176 aa)). Residues 71-78 (RGGQVTYH), 138-140 (SLG), and 151-153 (GLA) contribute to the substrate site. The active-site Acyl-thioester intermediate is the cysteine 169.

Belongs to the LipB family.

Its subcellular location is the cytoplasm. It carries out the reaction octanoyl-[ACP] + L-lysyl-[protein] = N(6)-octanoyl-L-lysyl-[protein] + holo-[ACP] + H(+). The protein operates within protein modification; protein lipoylation via endogenous pathway; protein N(6)-(lipoyl)lysine from octanoyl-[acyl-carrier-protein]: step 1/2. Functionally, catalyzes the transfer of endogenously produced octanoic acid from octanoyl-acyl-carrier-protein onto the lipoyl domains of lipoate-dependent enzymes. Lipoyl-ACP can also act as a substrate although octanoyl-ACP is likely to be the physiological substrate. This Shewanella sp. (strain ANA-3) protein is Octanoyltransferase.